Consider the following 156-residue polypeptide: Small ribosomal subunit protein uS7 (156 aa).

It belongs to the universal ribosomal protein uS7 family. In terms of assembly, part of the 30S ribosomal subunit. Contacts proteins S9 and S11.

Its function is as follows. One of the primary rRNA binding proteins, it binds directly to 16S rRNA where it nucleates assembly of the head domain of the 30S subunit. Is located at the subunit interface close to the decoding center, probably blocks exit of the E-site tRNA. This is Small ribosomal subunit protein uS7 from Natranaerobius thermophilus (strain ATCC BAA-1301 / DSM 18059 / JW/NM-WN-LF).